The chain runs to 879 residues: Valine--tRNA ligase (879 aa).

The short motif at 45–55 (PNVTGKLHLGH) is the 'HIGH' region element. The 'KMSKS' region motif lies at 521–525 (KMSKS). Lysine 524 provides a ligand contact to ATP. Residues 806-879 (LTELVNVDEE…ERMKELKESK (74 aa)) adopt a coiled-coil conformation.

It belongs to the class-I aminoacyl-tRNA synthetase family. ValS type 1 subfamily. As to quaternary structure, monomer.

It is found in the cytoplasm. It carries out the reaction tRNA(Val) + L-valine + ATP = L-valyl-tRNA(Val) + AMP + diphosphate. Its function is as follows. Catalyzes the attachment of valine to tRNA(Val). As ValRS can inadvertently accommodate and process structurally similar amino acids such as threonine, to avoid such errors, it has a 'posttransfer' editing activity that hydrolyzes mischarged Thr-tRNA(Val) in a tRNA-dependent manner. In Lactobacillus johnsonii (strain CNCM I-12250 / La1 / NCC 533), this protein is Valine--tRNA ligase.